The chain runs to 90 residues: Small cysteine-rich outer membrane protein OmcA (90 aa).

A signal peptide spans 1–19 (MKKAVLIAAMFCGVVSLSS). Cys20 carries N-palmitoyl cysteine lipidation. Residue Cys20 is the site of S-diacylglycerol cysteine attachment. The interval 69 to 90 (TECNSQSPQVKGCTSPDGRCKQ) is disordered.

In terms of assembly, part of a disulfide cross-linked outer membrane complex (COMC) composed of the major outer membrane porin (MOMP), the small cysteine-rich protein (OmcA) and the large cysteine-rich periplasmic protein (OmcB).

It localises to the cell outer membrane. In elementary bodies (EBs, the infectious stage, which is able to survive outside the host cell) provides the structural integrity of the outer envelope through disulfide cross-links with the large cysteine-rich periplasmic protein and the major outer membrane porin. It has been described in publications as the Sarkosyl-insoluble COMC (Chlamydia outer membrane complex), and serves as the functional equivalent of peptidoglycan. The protein is Small cysteine-rich outer membrane protein OmcA (omcA) of Chlamydia pneumoniae (Chlamydophila pneumoniae).